Consider the following 161-residue polypeptide: Troponin C, slow skeletal and cardiac muscles (161 aa).

At Met1 the chain carries N-acetylmethionine. EF-hand domains lie at 16–51 (QKNEFKAAFDIFVLGAEDGCISTKELGKVMRMLGQN), 52–87 (PTPEELQEMIDEVDEDGSGTVDFDEFLVMMVRCMKD), 92–127 (KSEEELSDLFRMFDKNADGYIDLEELKIMLQATGET), and 128–161 (ITEDDIEELMKDGDKNNDGRIDYDEFLEFMKGVE). Positions 65, 67, 69, 71, and 76 each coordinate Ca(2+). Ser98 bears the Phosphoserine mark. The Ca(2+) site is built by Asp105, Asn107, Asp109, Tyr111, Glu116, Asp141, Asn143, Asp145, Arg147, and Glu152.

The protein belongs to the troponin C family.

Functionally, troponin is the central regulatory protein of striated muscle contraction. Tn consists of three components: Tn-I which is the inhibitor of actomyosin ATPase, Tn-T which contains the binding site for tropomyosin and Tn-C. The binding of calcium to Tn-C abolishes the inhibitory action of Tn on actin filaments. The polypeptide is Troponin C, slow skeletal and cardiac muscles (TNNC1) (Bos taurus (Bovine)).